The chain runs to 450 residues: Probable malate:quinone oxidoreductase (450 aa).

It belongs to the MQO family. FAD is required as a cofactor.

The enzyme catalyses (S)-malate + a quinone = a quinol + oxaloacetate. Its pathway is carbohydrate metabolism; tricarboxylic acid cycle; oxaloacetate from (S)-malate (quinone route): step 1/1. The sequence is that of Probable malate:quinone oxidoreductase from Helicobacter pylori (strain P12).